A 233-amino-acid polypeptide reads, in one-letter code: uncharacterized protein (233 aa).

The protein belongs to the asfivirus H233R family.

This is an uncharacterized protein from African swine fever virus (isolate Warthog/Namibia/Wart80/1980) (ASFV).